Reading from the N-terminus, the 396-residue chain is Elongation factor Tu (396 aa).

Positions Lys10–Glu206 constitute a tr-type G domain. The G1 stretch occupies residues Gly19–Thr26. Gly19–Thr26 contacts GTP. Position 26 (Thr26) interacts with Mg(2+). The G2 stretch occupies residues Gly60–Ser64. Residues Asp81–Gly84 form a G3 region. GTP is bound by residues Asp81 to His85 and Asn136 to Asp139. Residues Asn136–Asp139 are G4. Residues Ser174 to Leu176 are G5.

The protein belongs to the TRAFAC class translation factor GTPase superfamily. Classic translation factor GTPase family. EF-Tu/EF-1A subfamily. In terms of assembly, monomer.

The protein localises to the cytoplasm. The catalysed reaction is GTP + H2O = GDP + phosphate + H(+). Functionally, GTP hydrolase that promotes the GTP-dependent binding of aminoacyl-tRNA to the A-site of ribosomes during protein biosynthesis. This Methylocella silvestris (strain DSM 15510 / CIP 108128 / LMG 27833 / NCIMB 13906 / BL2) protein is Elongation factor Tu.